Reading from the N-terminus, the 364-residue chain is Aminomethyltransferase (364 aa).

It belongs to the GcvT family. As to quaternary structure, the glycine cleavage system is composed of four proteins: P, T, L and H.

It carries out the reaction N(6)-[(R)-S(8)-aminomethyldihydrolipoyl]-L-lysyl-[protein] + (6S)-5,6,7,8-tetrahydrofolate = N(6)-[(R)-dihydrolipoyl]-L-lysyl-[protein] + (6R)-5,10-methylene-5,6,7,8-tetrahydrofolate + NH4(+). In terms of biological role, the glycine cleavage system catalyzes the degradation of glycine. The chain is Aminomethyltransferase from Thermotoga maritima (strain ATCC 43589 / DSM 3109 / JCM 10099 / NBRC 100826 / MSB8).